Consider the following 347-residue polypeptide: Major capsid protein (347 aa).

It belongs to the T7virus major capsid protein family. Homohexamer. Interacts with the connector protein and the minor capsid protein. Interacts with the capsid assembly scaffolding protein; capsid proteins and scaffolding proteins form building blocks that assemble to form the procapsid, each hexamer of the major capsid protein interacting with 2 scaffolding proteins.

It localises to the virion. Its function is as follows. Assembles with the minor capsid protein to form an icosahedral capsid with a T=7 symmetry, about 60 nm in diameter, and consisting of 415 capsid proteins. The major and minor capsid proteins are incorporated into the capsid in about a 90/10 ratio respectively. Once the capsid formed, encapsidates one single copy of the viral genome. This is Major capsid protein (10) from Escherichia coli (Bacteriophage T3).